A 226-amino-acid chain; its full sequence is UPF0173 metal-dependent hydrolase GFO_2312 (226 aa).

It belongs to the UPF0173 family.

In Christiangramia forsetii (strain DSM 17595 / CGMCC 1.15422 / KT0803) (Gramella forsetii), this protein is UPF0173 metal-dependent hydrolase GFO_2312.